Reading from the N-terminus, the 323-residue chain is Sodium/potassium-transporting ATPase subunit beta-2 (323 aa).

Over 1–50 (MPTITEDCIDGFQQYYSRPPERPKKKSLKQMVYDSEDNSYFGRSMDSWAK) the chain is Cytoplasmic. A helical; Signal-anchor for type II membrane protein transmembrane segment spans residues 51–71 (IGIFYVAFYGVLAALVAICMW). Topologically, residues 72 to 323 (AFFQTLDPRI…GSVHYELLID (252 aa)) are extracellular. Intrachain disulfides connect C153-C165 and C175-C189. N-linked (GlcNAc...) asparagine glycosylation is found at N180 and N206. A disulfide bridge connects residues C241 and C298.

The protein belongs to the X(+)/potassium ATPases subunit beta family. In terms of assembly, the sodium/potassium-transporting ATPase is composed of a catalytic alpha subunit, an auxiliary non-catalytic beta subunit and an additional regulatory subunit. In embryos, it is expressed in the neurons of the CNS and PNS, in Garland cells and posterior spiracles. In adults, it shows a nervous system specific distribution: optic lobes, brain, thoracic ganglia and axonal pathways in the leg. Both isoforms concentrate in the adult head, isoform 2.2 being predominant. Both isoforms are weakly expressed in the thorax and very poorly expressed in the abdomen.

It localises to the cell membrane. Its function is as follows. This is the non-catalytic component of the active enzyme, which catalyzes the hydrolysis of ATP coupled with the exchange of Na(+) and K(+) ions across the plasma membrane. The beta subunit regulates, through assembly of alpha/beta heterodimers, the number of sodium pumps transported to the plasma membrane. The chain is Sodium/potassium-transporting ATPase subunit beta-2 (nrv2) from Drosophila melanogaster (Fruit fly).